Here is a 65-residue protein sequence, read N- to C-terminus: Large ribosomal subunit protein bL33c (65 aa).

Belongs to the bacterial ribosomal protein bL33 family.

The protein resides in the plastid. It is found in the chloroplast. The chain is Large ribosomal subunit protein bL33c from Chaetosphaeridium globosum (Charophycean green alga).